The chain runs to 131 residues: Sec-independent protein translocase protein TatB (131 aa).

Residues 2-22 form a helical membrane-spanning segment; that stretch reads LGSLSWEHMLVLVVVGLVVLG. The interval 96-131 is disordered; that stretch reads AFDRPVNGAAAQPPPAPAPPPEPHRSGQTPFDADAT. Residues 107–116 are compositionally biased toward pro residues; sequence QPPPAPAPPP.

This sequence belongs to the TatB family. As to quaternary structure, the Tat system comprises two distinct complexes: a TatABC complex, containing multiple copies of TatA, TatB and TatC subunits, and a separate TatA complex, containing only TatA subunits. Substrates initially bind to the TatABC complex, which probably triggers association of the separate TatA complex to form the active translocon.

The protein localises to the cell membrane. Functionally, part of the twin-arginine translocation (Tat) system that transports large folded proteins containing a characteristic twin-arginine motif in their signal peptide across membranes. Together with TatC, TatB is part of a receptor directly interacting with Tat signal peptides. TatB may form an oligomeric binding site that transiently accommodates folded Tat precursor proteins before their translocation. The chain is Sec-independent protein translocase protein TatB from Mycolicibacterium paratuberculosis (strain ATCC BAA-968 / K-10) (Mycobacterium paratuberculosis).